Reading from the N-terminus, the 537-residue chain is uncharacterized protein (537 aa).

The first 15 residues, 1 to 15 (MALFQLFSFLNVTLG), serve as a signal peptide directing secretion. The next 2 membrane-spanning stretches (helical) occupy residues 459–479 (VLFS…GCCF) and 490–510 (VILL…LGFT).

It is found in the host membrane. This is an uncharacterized protein from Citrus sinensis (Sweet orange).